Here is a 363-residue protein sequence, read N- to C-terminus: Transcription factor Sox-18A (363 aa).

The segment at 20–66 (NSTWVPPADTVPEVSLIPSSPPAPDSPAPSPKPGYGFSTCEEKHGDP) is disordered. Over residues 38-51 (SSPPAPDSPAPSPK) the composition is skewed to pro residues. A DNA-binding region (HMG box) is located at residues 68 to 136 (IRRPMNAFMV…QHLQDHPNYK (69 aa)). Interaction with DNA regions lie at residues 70–83 (RPMN…KDER) and 94–106 (HNAV…GQSW). Residues 129–163 (LQDHPNYKYRPRRKKQAKKLKRMDPSPLLRNEGFT) are disordered. The span at 135-149 (YKYRPRRKKQAKKLK) shows a compositional bias: basic residues. Positions 149–210 (KRMDPSPLLR…VLEPSEPAFF (62 aa)) are important for transcriptional activation. One can recognise a Sox C-terminal domain in the interval 236–362 (KTMREISLPY…TAMYYTPCIT (127 aa)). The 9aaTAD motif lies at 308-316 (NEFDQYLNM).

In terms of tissue distribution, expressed in the adult spleen, lung, heart and kidney, and at a lower level in the adult testis, liver and brain.

Its subcellular location is the nucleus. Functionally, probable transcription factor. Binds to the consensus DNA sequence 5'-AACAAT-3'. Also binds 5'-CACAAT-3' and 5'-AATAAT-3' with similar affinity. This Xenopus laevis (African clawed frog) protein is Transcription factor Sox-18A (sox18-a).